The sequence spans 1825 residues: Proteasome activator complex subunit 4B (1825 aa).

HEAT repeat units lie at residues 458–502 (PEGP…LVDC), 981–1020 (NFCCRDITPRVLEFLEPTRTDVTQQQFKGALYCLLGNHCG), 1162–1200 (YPLPAPAVFFFVQSLNHDALVVRKMAIAAVAGILKQLKR), 1336–1374 (DAFLPVLKPHMERLANDSHESTQRCVAEIIAGLIRGSKH), 1618–1656 (PEQIPMVLAVLHEIAGSSSWHARYSVLTYLQTMVFYNLF), and 1662–1700 (EQCVQGVRALVIRLLEDEQLEVREMAATTLSGFLQCNFL). The tract at residues 1632–1720 (AGSSSWHARY…EALCKTRLPK (89 aa)) is bromodomain-like (BRDL).

This sequence belongs to the BLM10 family. As to quaternary structure, homodimer. Interacts with the 20S and 26S proteasomes.

The protein localises to the cytoplasm. The protein resides in the cytosol. It is found in the nucleus. It localises to the nucleus speckle. Functionally, associated component of the proteasome that specifically recognizes acetylated histones and promotes ATP- and ubiquitin-independent degradation of core histones during DNA damage response. Recognizes and binds acetylated histones via its bromodomain-like (BRDL) region and activates the proteasome by opening the gated channel for substrate entry. Binds to the core proteasome via its C-terminus, which occupies the same binding sites as the proteasomal ATPases, opening the closed structure of the proteasome via an active gating mechanism. involved in DNA damage response in somatic cells: binds to acetylated histones and promotes degradation of histones. The chain is Proteasome activator complex subunit 4B (psme4b) from Danio rerio (Zebrafish).